The following is a 293-amino-acid chain: Beta-lactamase (293 aa).

Positions 1 to 27 (MRFTATVLSRVATGLALGLSMATASLA) are cleaved as a signal peptide. The active-site Acyl-ester intermediate is the serine 74. Residue 238-240 (KSG) participates in substrate binding.

It belongs to the class-A beta-lactamase family.

The protein localises to the periplasm. The catalysed reaction is a beta-lactam + H2O = a substituted beta-amino acid. Hydrolyzes beta-lactams antibiotics. Rates of hydrolysis relative to benzylpenicillin =100: ampicillin = 27, carbenicillin = 25, cloxacillin = 0, cephaloridine = 4. The protein is Beta-lactamase of Rhodobacter capsulatus (Rhodopseudomonas capsulata).